A 411-amino-acid chain; its full sequence is Translation initiation factor 2 subunit gamma (411 aa).

One can recognise a tr-type G domain in the interval 9–203; sequence QAEVNIGMVG…AIQDFIPTPK (195 aa). Residues 18–25 are G1; the sequence is GHVDHGKT. Mg(2+)-binding residues include D21, T25, G46, and S48. Residue 21 to 26 participates in GTP binding; the sequence is DHGKTS. Residues 46–50 form a G2 region; the sequence is GISIR. Residues C61, C64, C73, and C76 each contribute to the Zn(2+) site. The interval 90–93 is G3; sequence DSPG. Residues 146–149 and 181–183 contribute to the GTP site; these read NKID and SAH. The interval 146-149 is G4; sequence NKID. A G5 region spans residues 181-183; it reads SAH.

Belongs to the TRAFAC class translation factor GTPase superfamily. Classic translation factor GTPase family. EIF2G subfamily. In terms of assembly, heterotrimer composed of an alpha, a beta and a gamma chain. Requires Mg(2+) as cofactor.

It catalyses the reaction GTP + H2O = GDP + phosphate + H(+). Its function is as follows. eIF-2 functions in the early steps of protein synthesis by forming a ternary complex with GTP and initiator tRNA. The sequence is that of Translation initiation factor 2 subunit gamma from Methanocaldococcus jannaschii (strain ATCC 43067 / DSM 2661 / JAL-1 / JCM 10045 / NBRC 100440) (Methanococcus jannaschii).